A 217-amino-acid polypeptide reads, in one-letter code: uncharacterized protein (217 aa).

Disordered regions lie at residues 1–85 (MGVK…RGNT) and 167–189 (KLRSPPHKDQHNSATNKDQEPDE). Residues 38–48 (AKSDKDKRKGS) are compositionally biased toward basic and acidic residues. Over residues 60 to 78 (NALPTKNLTTPPALNPLTT) the composition is skewed to low complexity. Basic and acidic residues predominate over residues 172–189 (PHKDQHNSATNKDQEPDE).

This is an uncharacterized protein from Saccharomyces cerevisiae (strain ATCC 204508 / S288c) (Baker's yeast).